The primary structure comprises 317 residues: Multivesicular body subunit 12B (317 aa).

The disordered stretch occupies residues 1–49; it reads MRSCFCVRRSRDPPPPQPPPPQRGTDQATMPEVKELSEALPETPMDPIT. The segment covering 13–22 has biased composition (pro residues); it reads PPPPQPPPPQ. Residues 45 to 191 form the MABP domain; sequence MDPITGVGVV…SMGIWYRMGR (147 aa). Serine 99 carries the post-translational modification Phosphoserine. A phosphothreonine mark is found at threonine 120, threonine 202, and threonine 203. The segment at 193–218 is disordered; the sequence is PRNHDSSQPTTPSQSSASSTPAPNLP. Residues 198–214 are compositionally biased toward low complexity; that stretch reads SSQPTTPSQSSASSTPA. Serine 222 carries the post-translational modification Phosphoserine. The 50-residue stretch at 252-301 folds into the UMA domain; the sequence is MDGVPFMISEKFSCIPESMQPFDLLGITIKSLAEIEKEYEYSFRTEQSAA. A disordered region spans residues 297–317; it reads EQSAAARLPPSPTRCQQIPQS. Residue serine 307 is modified to Phosphoserine.

Belongs to the MVB12 family. Component of the ESCRT-I complex (endosomal sorting complex required for transport I) which consists of TSG101, VPS28, a VPS37 protein (VPS37A to -D) and MVB12A or MVB12B in a 1:1:1:1 stoichiometry. Interacts with TSG101; the association appears to be mediated by the TSG101-VPS37 binary subcomplex. Interacts with VPS28. Interacts with VPS37B; the association appears to be mediated by the TSG101-VPS37 binary subcomplex. Interacts with VPS37C; the association appears to be mediated by the TSG101-VPS37 binary subcomplex.

Its subcellular location is the endosome. It is found in the late endosome membrane. Functionally, component of the ESCRT-I complex, a regulator of vesicular trafficking process. Required for the sorting of endocytic ubiquitinated cargos into multivesicular bodies. This Mus musculus (Mouse) protein is Multivesicular body subunit 12B (Mvb12b).